The chain runs to 168 residues: GTP-dependent dephospho-CoA kinase (168 aa).

Residues D49, I50, V51, D68, K70, and E120 each contribute to the GTP site.

Belongs to the GTP-dependent DPCK family.

The enzyme catalyses 3'-dephospho-CoA + GTP = GDP + CoA + H(+). It participates in cofactor biosynthesis; coenzyme A biosynthesis. In terms of biological role, catalyzes the GTP-dependent phosphorylation of the 3'-hydroxyl group of dephosphocoenzyme A to form coenzyme A (CoA). This Pyrobaculum islandicum (strain DSM 4184 / JCM 9189 / GEO3) protein is GTP-dependent dephospho-CoA kinase.